A 376-amino-acid polypeptide reads, in one-letter code: Protein FAM199X (376 aa).

A compositionally biased stretch (basic and acidic residues) spans 237-253 (YIKEHSPRQRSTRESWK). The tract at residues 237–350 (YIKEHSPRQR…QRQARKERLS (114 aa)) is disordered. The span at 255–300 (TSYSTASTSGVSGASVSSSSASMVSTASSTGSSGGNSASNSSANMS) shows a compositional bias: low complexity. Residues 318 to 337 (DSKKRSKQRKLQQKALRKRQ) show a composition bias toward basic residues. A coiled-coil region spans residues 320–349 (KKRSKQRKLQQKALRKRQLKEQRQARKERL). Basic and acidic residues predominate over residues 338 to 349 (LKEQRQARKERL).

It belongs to the FAM199 family.

This is Protein FAM199X (fam199x) from Xenopus tropicalis (Western clawed frog).